The sequence spans 598 residues: Peroxisomal multifunctional enzyme type 2 (598 aa).

Positions methionine 1–glycine 309 are (3R)-hydroxyacyl-CoA dehydrogenase. Residues valine 16–valine 40, leucine 24, aspartate 43, serine 78–valine 79, and asparagine 102 contribute to the NAD(+) site. Serine 154 serves as a coordination point for substrate. The Proton acceptor role is filled by tyrosine 167. NAD(+)-binding positions include tyrosine 167 to lysine 171 and alanine 199 to arginine 202. Residues glycine 310 to leucine 598 are enoyl-CoA hydratase 2. (3R)-3-hydroxydecanoyl-CoA is bound by residues histidine 390–glycine 391, lysine 419, aspartate 496–histidine 501, glycine 519, and phenylalanine 549. The MaoC-like domain maps to proline 469–glycine 586. The short motif at alanine 596–leucine 598 is the Microbody targeting signal element.

It belongs to the short-chain dehydrogenases/reductases (SDR) family. Homodimer.

It is found in the peroxisome. The enzyme catalyses a (3R)-3-hydroxyacyl-CoA + NAD(+) = a 3-oxoacyl-CoA + NADH + H(+). It catalyses the reaction a (3R)-3-hydroxyacyl-CoA = a (2E)-enoyl-CoA + H2O. It functions in the pathway lipid metabolism; fatty acid beta-oxidation. Bifunctional enzyme acting on the peroxisomal beta-oxidation pathway for fatty acids. In Drosophila melanogaster (Fruit fly), this protein is Peroxisomal multifunctional enzyme type 2.